Here is a 434-residue protein sequence, read N- to C-terminus: 3-phosphoshikimate 1-carboxyvinyltransferase (434 aa).

3-phosphoshikimate-binding residues include K15, S16, and R20. K15 provides a ligand contact to phosphoenolpyruvate. The phosphoenolpyruvate site is built by G96 and R124. 3-phosphoshikimate is bound by residues S169, Q171, S195, D319, and K346. Position 171 (Q171) interacts with phosphoenolpyruvate. The active-site Proton acceptor is D319. The phosphoenolpyruvate site is built by R350 and R394.

The protein belongs to the EPSP synthase family. As to quaternary structure, monomer.

The protein localises to the cytoplasm. The catalysed reaction is 3-phosphoshikimate + phosphoenolpyruvate = 5-O-(1-carboxyvinyl)-3-phosphoshikimate + phosphate. Its pathway is metabolic intermediate biosynthesis; chorismate biosynthesis; chorismate from D-erythrose 4-phosphate and phosphoenolpyruvate: step 6/7. In terms of biological role, catalyzes the transfer of the enolpyruvyl moiety of phosphoenolpyruvate (PEP) to the 5-hydroxyl of shikimate-3-phosphate (S3P) to produce enolpyruvyl shikimate-3-phosphate and inorganic phosphate. The chain is 3-phosphoshikimate 1-carboxyvinyltransferase from Prosthecochloris aestuarii (strain DSM 271 / SK 413).